Consider the following 298-residue polypeptide: 4-hydroxy-tetrahydrodipicolinate synthase (298 aa).

T51 provides a ligand contact to pyruvate. Y139 (proton donor/acceptor) is an active-site residue. The active-site Schiff-base intermediate with substrate is K167. Residue I209 participates in pyruvate binding.

The protein belongs to the DapA family. Homotetramer; dimer of dimers.

The protein resides in the cytoplasm. The enzyme catalyses L-aspartate 4-semialdehyde + pyruvate = (2S,4S)-4-hydroxy-2,3,4,5-tetrahydrodipicolinate + H2O + H(+). Its pathway is amino-acid biosynthesis; L-lysine biosynthesis via DAP pathway; (S)-tetrahydrodipicolinate from L-aspartate: step 3/4. Catalyzes the condensation of (S)-aspartate-beta-semialdehyde [(S)-ASA] and pyruvate to 4-hydroxy-tetrahydrodipicolinate (HTPA). This is 4-hydroxy-tetrahydrodipicolinate synthase from Haemophilus influenzae (strain ATCC 51907 / DSM 11121 / KW20 / Rd).